The sequence spans 250 residues: Uracil-DNA glycosylase (250 aa).

Aspartate 78 functions as the Proton acceptor in the catalytic mechanism. Positions 228-250 are disordered; sequence RGQKPVDWSGEQNNASRQGEFAL.

The protein belongs to the uracil-DNA glycosylase (UDG) superfamily. UNG family.

The protein localises to the cytoplasm. The catalysed reaction is Hydrolyzes single-stranded DNA or mismatched double-stranded DNA and polynucleotides, releasing free uracil.. Its function is as follows. Excises uracil residues from the DNA which can arise as a result of misincorporation of dUMP residues by DNA polymerase or due to deamination of cytosine. The protein is Uracil-DNA glycosylase of Bordetella pertussis (strain Tohama I / ATCC BAA-589 / NCTC 13251).